A 106-amino-acid chain; its full sequence is Toxin-like structure LSTX-D7 (106 aa).

A signal peptide spans 1-20 (MMKVLVVFALLVTLISYSSS). Residues 21-41 (EGIDDLEADELLSLMANEQTR) constitute a propeptide that is removed on maturation. 4 cysteine pairs are disulfide-bonded: cysteine 45-cysteine 60, cysteine 52-cysteine 69, cysteine 59-cysteine 85, and cysteine 71-cysteine 83.

It belongs to the neurotoxin 19 (CSTX) family. 02 (D7) subfamily. In terms of tissue distribution, expressed by the venom gland.

The protein resides in the secreted. The protein is Toxin-like structure LSTX-D7 of Lycosa singoriensis (Wolf spider).